A 237-amino-acid polypeptide reads, in one-letter code: Ribonuclease PH (237 aa).

Phosphate contacts are provided by residues Arg86 and 124–126; that span reads GTR.

This sequence belongs to the RNase PH family. In terms of assembly, homohexameric ring arranged as a trimer of dimers.

It carries out the reaction tRNA(n+1) + phosphate = tRNA(n) + a ribonucleoside 5'-diphosphate. Phosphorolytic 3'-5' exoribonuclease that plays an important role in tRNA 3'-end maturation. Removes nucleotide residues following the 3'-CCA terminus of tRNAs; can also add nucleotides to the ends of RNA molecules by using nucleoside diphosphates as substrates, but this may not be physiologically important. Probably plays a role in initiation of 16S rRNA degradation (leading to ribosome degradation) during starvation. In Nitrobacter winogradskyi (strain ATCC 25391 / DSM 10237 / CIP 104748 / NCIMB 11846 / Nb-255), this protein is Ribonuclease PH.